The sequence spans 341 residues: MAP3K12-binding inhibitory protein 1 (341 aa).

The residue at position 91 (Ser91) is a Phosphoserine. Glycyl lysine isopeptide (Lys-Gly) (interchain with G-Cter in SUMO2) cross-links involve residues Lys94, Lys127, Lys137, Lys151, and Lys233. The interaction with MAP3K12 stretch occupies residues 170 to 341; that stretch reads AEINENNVRE…EADSMAAHLP (172 aa). Positions 269-283 are leucine-zipper 1; that stretch reads IYQRIKKLEDKILEL. Lys299 is modified (N6-acetyllysine; alternate). Residue Lys299 forms a Glycyl lysine isopeptide (Lys-Gly) (interchain with G-Cter in SUMO2); alternate linkage. Residues Lys302 and Lys323 each participate in a glycyl lysine isopeptide (Lys-Gly) (interchain with G-Cter in SUMO2) cross-link. A leucine-zipper 2 region spans residues 312-327; sequence LAELDEKISALKRALL.

As to quaternary structure, component of the ADA2A-containing complex (ATAC), composed of KAT14, KAT2A, TADA2L, TADA3L, ZZ3, MBIP, WDR5, YEATS2, CCDC101 and DR1. In the complex, it probably interacts directly with KAT2A, KAT14 and WDR5.

It is found in the nucleus. It localises to the cytoplasm. In terms of biological role, inhibits the MAP3K12 activity to induce the activation of the JNK/SAPK pathway. Component of the ATAC complex, a complex with histone acetyltransferase activity on histones H3 and H4. This Mus musculus (Mouse) protein is MAP3K12-binding inhibitory protein 1 (Mbip).